A 586-amino-acid polypeptide reads, in one-letter code: Arginine--tRNA ligase (586 aa).

The 'HIGH' region motif lies at 128 to 138; that stretch reads ANPTGPLHVGH.

The protein belongs to the class-I aminoacyl-tRNA synthetase family. As to quaternary structure, monomer.

It is found in the cytoplasm. The enzyme catalyses tRNA(Arg) + L-arginine + ATP = L-arginyl-tRNA(Arg) + AMP + diphosphate. The chain is Arginine--tRNA ligase from Thioalkalivibrio sulfidiphilus (strain HL-EbGR7).